A 95-amino-acid polypeptide reads, in one-letter code: Integration host factor subunit beta (95 aa).

Belongs to the bacterial histone-like protein family. As to quaternary structure, heterodimer of an alpha and a beta chain.

Functionally, this protein is one of the two subunits of integration host factor, a specific DNA-binding protein that functions in genetic recombination as well as in transcriptional and translational control. In Paracoccus denitrificans (strain Pd 1222), this protein is Integration host factor subunit beta.